The following is a 323-amino-acid chain: Cuticle collagen 39 (323 aa).

The signal sequence occupies residues 1–28; it reads MTGPTCLAVVAGISGVFVFGALFSVAQI. The segment covering 80–89 has biased composition (polar residues); the sequence is QCNCGPQASN. Residues 80–293 are disordered; it reads QCNCGPQASN…GAAEQGYRHR (214 aa). Triple-helical region stretches follow at residues 93 to 125, 138 to 200, and 203 to 265; these read GPPG…AGPK, GSPG…GGQR, and GLPG…PGAD. Over residues 108 to 117 the composition is skewed to gly residues; sequence GQPGGAGNPG. Residues 136 to 146 show a composition bias toward low complexity; sequence PAGSPGPAGAP. Positions 159-168 are enriched in gly residues; it reads GHPGQGGSQG. The segment covering 169 to 191 has biased composition (low complexity); the sequence is PAGPRGPAGDAGAPGQVGAPGNP. Over residues 224-233 the composition is skewed to gly residues; the sequence is GQSGGQGQQG. The segment covering 234–267 has biased composition (low complexity); sequence PAGPAGPDGQPGQPGQDGQAGAPGNDGAPGADAA.

This sequence belongs to the cuticular collagen family. In terms of assembly, collagen polypeptide chains are complexed within the cuticle by disulfide bonds and other types of covalent cross-links.

Functionally, nematode cuticles are composed largely of collagen-like proteins. The cuticle functions both as an exoskeleton and as a barrier to protect the worm from its environment. The protein is Cuticle collagen 39 (col-39) of Caenorhabditis elegans.